The following is a 688-amino-acid chain: Ethylmalonyl-CoA mutase (688 aa).

Positions 530–659 (TPRLVVGKPG…VGLAKVVERA (130 aa)) constitute a B12-binding domain. An adenosylcob(III)alamin-binding site is contributed by H543. Residues 666–688 (DRADTEAGVPGAPKRNESGAQVF) are disordered.

This sequence belongs to the methylmalonyl-CoA mutase family. It depends on adenosylcob(III)alamin as a cofactor.

The catalysed reaction is (2R)-ethylmalonyl-CoA = (2S)-methylsuccinyl-CoA. Its function is as follows. Radical enzyme that catalyzes the transformation of (2R)-ethylmalonyl-CoA to (2S)-methylsuccinyl-CoA. Is involved in the ethylmalonyl-CoA pathway for acetyl-CoA assimilation required for M.extorquens growth on one- and two-carbon compounds such as ethylamine, methanol or ethanol as sole carbon source. This enzyme acts as a regulatory metabolic control point in this pathway, that allows M.extorquens to efficiently restore metabolic balance when challenged with a sudden change in the growth substrate. The polypeptide is Ethylmalonyl-CoA mutase (Methylorubrum extorquens (strain ATCC 14718 / DSM 1338 / JCM 2805 / NCIMB 9133 / AM1) (Methylobacterium extorquens)).